Here is a 552-residue protein sequence, read N- to C-terminus: Nucleolar complex protein 4 (552 aa).

It belongs to the CBF/MAK21 family. In terms of assembly, interacts with NOP14 and MPP10. Interacts with snoRNA U3. Component of the ribosomal small subunit (SSU) processome composed of at least 40 protein subunits and snoRNA U3.

It is found in the nucleus. The protein localises to the nucleolus. In terms of biological role, involved in nucleolar processing of pre-18S ribosomal RNA and ribosome assembly. Has a role in the nuclear export of 40S pre-ribosomal subunit to the cytoplasm. Its subcellular location and association with pre-40S subunit are unaffected by RPS19 disruptions, suggesting it acts before the ribosomal protein. The chain is Nucleolar complex protein 4 (NOC4) from Saccharomyces cerevisiae (strain ATCC 204508 / S288c) (Baker's yeast).